The primary structure comprises 353 residues: Photosystem II D2 protein (353 aa).

T2 is modified (N-acetylthreonine). Phosphothreonine is present on T2. A helical transmembrane segment spans residues 41-61 (CAYFALGGWFTGTTFVTSWYT). Residue H118 participates in chlorophyll a binding. A helical membrane pass occupies residues 125–141 (GFMLRQFELARSVQLRP). Pheophytin a-binding residues include Q130 and N143. A helical transmembrane segment spans residues 153–166 (VFVSVFLIYPLGQS). H198 provides a ligand contact to chlorophyll a. The helical transmembrane segment at 208–228 (AALLCAIHGATVENTLFEDGD) threads the bilayer. Residues H215 and F262 each coordinate a plastoquinone. H215 contributes to the Fe cation binding site. A Fe cation-binding site is contributed by H269. Residues 279–295 (GLWMSALGVVGLALNLR) traverse the membrane as a helical segment.

Belongs to the reaction center PufL/M/PsbA/D family. In terms of assembly, PSII is composed of 1 copy each of membrane proteins PsbA, PsbB, PsbC, PsbD, PsbE, PsbF, PsbH, PsbI, PsbJ, PsbK, PsbL, PsbM, PsbT, PsbX, PsbY, PsbZ, Psb30/Ycf12, at least 3 peripheral proteins of the oxygen-evolving complex and a large number of cofactors. It forms dimeric complexes. It depends on The D1/D2 heterodimer binds P680, chlorophylls that are the primary electron donor of PSII, and subsequent electron acceptors. It shares a non-heme iron and each subunit binds pheophytin, quinone, additional chlorophylls, carotenoids and lipids. There is also a Cl(-1) ion associated with D1 and D2, which is required for oxygen evolution. The PSII complex binds additional chlorophylls, carotenoids and specific lipids. as a cofactor.

The protein localises to the plastid. It is found in the chloroplast thylakoid membrane. The catalysed reaction is 2 a plastoquinone + 4 hnu + 2 H2O = 2 a plastoquinol + O2. Its function is as follows. Photosystem II (PSII) is a light-driven water:plastoquinone oxidoreductase that uses light energy to abstract electrons from H(2)O, generating O(2) and a proton gradient subsequently used for ATP formation. It consists of a core antenna complex that captures photons, and an electron transfer chain that converts photonic excitation into a charge separation. The D1/D2 (PsbA/PsbD) reaction center heterodimer binds P680, the primary electron donor of PSII as well as several subsequent electron acceptors. D2 is needed for assembly of a stable PSII complex. The polypeptide is Photosystem II D2 protein (Olimarabidopsis pumila (Dwarf rocket)).